An 83-amino-acid chain; its full sequence is Exodeoxyribonuclease 7 small subunit (83 aa).

It belongs to the XseB family. Heterooligomer composed of large and small subunits.

Its subcellular location is the cytoplasm. The enzyme catalyses Exonucleolytic cleavage in either 5'- to 3'- or 3'- to 5'-direction to yield nucleoside 5'-phosphates.. Bidirectionally degrades single-stranded DNA into large acid-insoluble oligonucleotides, which are then degraded further into small acid-soluble oligonucleotides. This Rhodopseudomonas palustris (strain BisB5) protein is Exodeoxyribonuclease 7 small subunit.